The sequence spans 473 residues: Photosystem II CP43 reaction center protein (473 aa).

The propeptide occupies 1 to 14 (MKTLYSLRRFYPVE). The residue at position 15 (threonine 15) is an N-acetylthreonine. A Phosphothreonine modification is found at threonine 15. Helical transmembrane passes span 69–93 (LFEV…PHLA), 134–155 (LLGP…KDRN), 178–200 (KALY…RKIT), 255–275 (KPFA…LSYS), and 291–312 (WFNN…ASQA). Glutamate 367 is a binding site for [CaMn4O5] cluster. Residues 447-471 (RARAAAAGFEKGIDRDFEPVLSMTP) traverse the membrane as a helical segment.

The protein belongs to the PsbB/PsbC family. PsbC subfamily. As to quaternary structure, PSII is composed of 1 copy each of membrane proteins PsbA, PsbB, PsbC, PsbD, PsbE, PsbF, PsbH, PsbI, PsbJ, PsbK, PsbL, PsbM, PsbT, PsbX, PsbY, PsbZ, Psb30/Ycf12, at least 3 peripheral proteins of the oxygen-evolving complex and a large number of cofactors. It forms dimeric complexes. It depends on Binds multiple chlorophylls and provides some of the ligands for the Ca-4Mn-5O cluster of the oxygen-evolving complex. It may also provide a ligand for a Cl- that is required for oxygen evolution. PSII binds additional chlorophylls, carotenoids and specific lipids. as a cofactor.

Its subcellular location is the plastid. The protein localises to the chloroplast thylakoid membrane. Its function is as follows. One of the components of the core complex of photosystem II (PSII). It binds chlorophyll and helps catalyze the primary light-induced photochemical processes of PSII. PSII is a light-driven water:plastoquinone oxidoreductase, using light energy to abstract electrons from H(2)O, generating O(2) and a proton gradient subsequently used for ATP formation. The protein is Photosystem II CP43 reaction center protein of Eucalyptus globulus subsp. globulus (Tasmanian blue gum).